The sequence spans 66 residues: KEGYIVNYHDGCKYECYKLGDNDYCLRECKARYGKGAGGYCYAFGCWCTHLYEQAVVWPLPKKTCN.

The region spanning 1 to 66 is the LCN-type CS-alpha/beta domain; sequence KEGYIVNYHD…VWPLPKKTCN (66 aa). Disulfide bonds link C12–C65, C16–C41, C25–C46, and C29–C48. Position 66 is an asparagine amide (N66).

This sequence belongs to the long (4 C-C) scorpion toxin superfamily. Sodium channel inhibitor family. Beta subfamily. Expressed by the venom gland.

Its subcellular location is the secreted. In terms of biological role, beta toxins bind voltage-independently at site-4 of sodium channels and shift the voltage of activation toward more negative potentials thereby affecting sodium channel activation and promoting spontaneous and repetitive firing. A mixture of Cbo2 and Cbo3 is weakly active on the human voltage-gated sodium channels Nav1.4/SCN4A and Nav1.6/SCN8A when tested at 200 nM. In vivo, is toxic to mice when intraperitoneally injected. The protein is Beta-toxin Cbo3 of Centruroides bonito (Scorpion).